Consider the following 483-residue polypeptide: 6-phosphogluconate dehydrogenase, decarboxylating (483 aa).

Residues 10-15 (GLAVMG) and 33-35 (NRT) each bind NADP(+). Lys-38 carries the N6-acetyllysine modification. Phosphoserine is present on Ser-57. Lys-59 carries the post-translational modification N6-acetyllysine. NADP(+) contacts are provided by residues 75 to 77 (VKA) and Asn-103. Residues Asn-103 and 129–131 (SGG) each bind substrate. Ser-129 is modified (phosphoserine). The Proton acceptor role is filled by Lys-184. Position 187–188 (187–188 (HN)) interacts with substrate. Catalysis depends on Glu-191, which acts as the Proton donor. The substrate site is built by Tyr-192, Lys-261, Arg-288, Arg-447, and His-453. Position 478-481 (478-481 (SSSY)) interacts with NADP(+).

The protein belongs to the 6-phosphogluconate dehydrogenase family. In terms of assembly, homodimer.

It localises to the cytoplasm. The enzyme catalyses 6-phospho-D-gluconate + NADP(+) = D-ribulose 5-phosphate + CO2 + NADPH. Its pathway is carbohydrate degradation; pentose phosphate pathway; D-ribulose 5-phosphate from D-glucose 6-phosphate (oxidative stage): step 3/3. Functionally, catalyzes the oxidative decarboxylation of 6-phosphogluconate to ribulose 5-phosphate and CO(2), with concomitant reduction of NADP to NADPH. The polypeptide is 6-phosphogluconate dehydrogenase, decarboxylating (Rattus norvegicus (Rat)).